The sequence spans 248 residues: UPF0273 protein APE_1505.1 (248 aa).

Residues 3-247 enclose the KaiC domain; it reads DRVKTGIPGM…VVRIGRRVSI (245 aa). 30 to 37 contacts ATP; that stretch reads GGPGTGKS.

It belongs to the UPF0273 family.

The chain is UPF0273 protein APE_1505.1 from Aeropyrum pernix (strain ATCC 700893 / DSM 11879 / JCM 9820 / NBRC 100138 / K1).